A 454-amino-acid polypeptide reads, in one-letter code: MSDNDTIVAQATPPGRGGVGILRISGFKAREVAETVLGKLPKPRYADYLPFKDADGSVLDQGIALWFPGPNSFTGEDVLELQGHGGPVILDLLLKRILTIPGLRIARPGEFSERAFLNDKLDLAQAEAIADLIDASSEQAARSALNSLQGAFSARVNHLVEALTHLRIYVEAAIDFPDEEIDFLSDGKIEAQLNDVIADLDAVRAEARQGSLLREGMKVVIAGRPNAGKSSLLNALAGREAAIVTDIAGTTRDVLREHIHIDGMPLHIIDTAGLREASDEVERIGIERAWQEIEQADRVLFMVDGTTTDAVDPAEIWPEFIARLPAKLPITVVRNKADITGETLGMSEVNGHALIRLSAKTGEGVDVLRNHLKQSMGFDTNMEGGFLARRRHLQALEQAAEHLQQGKAQLLGAWAGELLAEELRLAQQNLSEITGEFTSDDLLGRIFSSFCIGK.

Arg-23, Glu-80, and Lys-120 together coordinate (6S)-5-formyl-5,6,7,8-tetrahydrofolate. The TrmE-type G domain occupies 216–377 (GMKVVIAGRP…LRNHLKQSMG (162 aa)). Asn-226 contributes to the K(+) binding site. GTP-binding positions include 226-231 (NAGKSS), 245-251 (TDIAGTT), 270-273 (DTAG), and 335-338 (NKAD). Ser-230 is a Mg(2+) binding site. The K(+) site is built by Thr-245, Ile-247, and Thr-250. Thr-251 serves as a coordination point for Mg(2+). Lys-454 provides a ligand contact to (6S)-5-formyl-5,6,7,8-tetrahydrofolate.

It belongs to the TRAFAC class TrmE-Era-EngA-EngB-Septin-like GTPase superfamily. TrmE GTPase family. In terms of assembly, homodimer. Heterotetramer of two MnmE and two MnmG subunits. It depends on K(+) as a cofactor.

The protein resides in the cytoplasm. Its function is as follows. Exhibits a very high intrinsic GTPase hydrolysis rate. Involved in the addition of a carboxymethylaminomethyl (cmnm) group at the wobble position (U34) of certain tRNAs, forming tRNA-cmnm(5)s(2)U34. This chain is tRNA modification GTPase MnmE, found in Escherichia coli O157:H7.